A 410-amino-acid chain; its full sequence is 2-oxoglutarate-dependent dioxygenase AOP3 (410 aa).

Residues 258–355 form the Fe2OG dioxygenase domain; it reads GNASVGAKEA…RYAAALFSYP (98 aa). The Fe cation site is built by H278, D280, and H335. R346 is a binding site for 2-oxoglutarate.

This sequence belongs to the iron/ascorbate-dependent oxidoreductase family. The cofactor is Fe(2+).

In terms of biological role, 2-oxoglutarate-dependent dioxygenase involved in glucosinolates biosynthesis. Catalyzes the conversion of methylsulfinylalkyl glucosinolates to hydroxyalkyl glucosinolates. The sequence is that of 2-oxoglutarate-dependent dioxygenase AOP3 (AOP3) from Arabidopsis thaliana (Mouse-ear cress).